We begin with the raw amino-acid sequence, 1255 residues long: ATP-binding cassette sub-family B member 5 (1255 aa).

A helical membrane pass occupies residues 46–66 (IVLMTLGILASMINGATVPLM). The ABC transmembrane type-1 1 domain maps to 51 to 351 (LGILASMING…SVAPHLETFT (301 aa)). 2 N-linked (GlcNAc...) asparagine glycosylation sites follow: Asn-86 and Asn-92. A helical membrane pass occupies residues 104 to 124 (IIVLTLYYIGIGAAALIFGYV). Asn-189 is a glycosylation site (N-linked (GlcNAc...) asparagine). 2 consecutive transmembrane segments (helical) span residues 290-310 (LSLG…FWYG) and 314-334 (IFGG…FSVI). 2 N-linked (GlcNAc...) asparagine glycosylation sites follow: Asn-372 and Asn-391. The ABC transporter 1 domain occupies 387–623 (IEFKNVSFSY…QGLYYSLAMA (237 aa)). 422-429 (GPSGSGKS) contacts ATP. N-linked (GlcNAc...) asparagine glycosylation occurs at Asn-643. Helical transmembrane passes span 694 to 714 (VLGT…SIIF) and 738 to 758 (MMLV…GLFY). Positions 694–981 (VLGTLASALN…TLVWAPEYSK (288 aa)) constitute an ABC transmembrane type-1 2 domain. A glycan (N-linked (GlcNAc...) asparagine) is linked at Asn-790. Helical transmembrane passes span 814 to 836 (LGIV…IYGW), 841 to 863 (LILS…MAGF), and 955 to 975 (MFIV…TLVW). In terms of domain architecture, ABC transporter 2 spans 1016–1254 (LEFREVSFVY…GDTYFKLVAA (239 aa)). The N-linked (GlcNAc...) asparagine glycan is linked to Asn-1036. ATP is bound at residue 1051–1058 (GSSGCGKS). 3 N-linked (GlcNAc...) asparagine glycosylation sites follow: Asn-1105, Asn-1189, and Asn-1229.

This sequence belongs to the ABC transporter superfamily. ABCB family. Multidrug resistance exporter (TC 3.A.1.201) subfamily. In terms of tissue distribution, in developing eye, expressed in basal limbal epithelium but not in central cornea. Acts as a marker of limbal stem cells.

Its subcellular location is the cell membrane. The catalysed reaction is daunorubicin(in) + ATP + H2O = daunorubicin(out) + ADP + phosphate + H(+). Functionally, energy-dependent efflux transporter responsible for decreased drug accumulation in multidrug-resistant cells. Specifically present in limbal stem cells, where it plays a key role in corneal development and repair. The chain is ATP-binding cassette sub-family B member 5 from Mus musculus (Mouse).